The primary structure comprises 809 residues: 3',5'-cyclic-AMP phosphodiesterase 4D (809 aa).

The segment at 1 to 107 is disordered; it reads MEAEGSSAPA…SGATGRVRHR (107 aa). 3 positions are modified to phosphoserine: histidine 54, proline 59, and proline 63. Over residues 58-89 the composition is skewed to pro residues; that stretch reads PPPPPPSPQPQPQCPLQPPPPPPLPPPPPPPG. The segment covering 90 to 102 has biased composition (low complexity); sequence AARGRYASSGATG. Residues serine 142, serine 299, serine 301, serine 348, and serine 375 each carry the phosphoserine modification. The disordered stretch occupies residues 343–364; the sequence is EVEIPSPTQKEKEKKKRPMSQI. One can recognise a PDEase domain in the interval 386–715; that stretch reads VKTEQEDVLA…EWYQSTIPQS (330 aa). A Glycyl lysine isopeptide (Lys-Gly) (interchain with G-Cter in SUMO) cross-link involves residue lysine 387. The Proton donor role is filled by histidine 462. Histidine 462 is a binding site for 3',5'-cyclic AMP. Histidine 462 provides a ligand contact to AMP. Zn(2+) contacts are provided by histidine 466, histidine 502, aspartate 503, and aspartate 620. Positions 503, 620, 623, 671, and 674 each coordinate AMP. Aspartate 503 contacts Mg(2+). Aspartate 503 is a Mn(2+) binding site. Residues glutamine 671 and phenylalanine 674 each contribute to the 3',5'-cyclic AMP site. Disordered stretches follow at residues 710 to 729 and 739 to 809; these read STIP…GRQG and TLEE…SPDT. Residues 762–773 show a composition bias toward polar residues; that stretch reads CSDSKTLCTQDS. Positions 779–796 are enriched in acidic residues; sequence PLDEQVEEEAVGEEEESQ.

It belongs to the cyclic nucleotide phosphodiesterase family. PDE4 subfamily. As to quaternary structure, homodimer for the long isoforms. Isoforms with truncated N-termini are monomeric. Isoform 3 is part of a ternary complex containing PRKAR2A, PRKAR2B and AKAP9. Interacts with PDE4DIP. Identified in a complex composed of RYR1, PDE4D, PKA, FKBP1A and protein phosphatase 1 (PP1). Isoform 5, isoform N3 and isoform 12 bind RACK1 via their unique N-terminus. Binds ARRB2. Interacts (via N-terminal region) with SHANK2 (via proline-rich region); the interaction is increased in a PKA-dependent manner. Zn(2+) serves as cofactor. It depends on Mg(2+) as a cofactor. Requires Mn(2+) as cofactor. Long isoforms that share a conserved PKA phosphorylation site in the N-terminus are activated by PKA through phosphorylation. Isoform 3 and isoform 7 are activated by phosphorylation (in vitro), but not isoform 6. Isoform N3 and isoform 12 are phosphorylated on Ser-49, Ser-51, Ser-55 and Ser-59. Post-translationally, sumoylation of long isoforms by PIAS4 augments their activation by PKA phosphorylation and represses their inhibition by ERK phosphorylation. Expressed in colonic epithelial cells (at protein level). Widespread; most abundant in skeletal muscle. In terms of tissue distribution, detected in brain. As to expression, detected in brain, placenta, lung and kidney. Detected in heart and skeletal muscle.

It is found in the apical cell membrane. It localises to the cytoplasm. The protein resides in the membrane. The protein localises to the cytoskeleton. Its subcellular location is the microtubule organizing center. It is found in the centrosome. The enzyme catalyses 3',5'-cyclic AMP + H2O = AMP + H(+). It participates in purine metabolism; 3',5'-cyclic AMP degradation; AMP from 3',5'-cyclic AMP: step 1/1. With respect to regulation, inhibited by rolipram. Activated by phosphatidic acid. Its function is as follows. Hydrolyzes the second messenger cAMP, which is a key regulator of many important physiological processes. The protein is 3',5'-cyclic-AMP phosphodiesterase 4D of Homo sapiens (Human).